The primary structure comprises 244 residues: tRNA (guanine-N(7)-)-methyltransferase (244 aa).

The disordered stretch occupies residues 1–24; it reads MTDSHVPHPESPAVEEGEERPHRR. Positions 74, 99, 126, and 149 each coordinate S-adenosyl-L-methionine. Aspartate 149 is an active-site residue. Substrate is bound by residues lysine 153, aspartate 185, and 222 to 225; that span reads TKFE.

Belongs to the class I-like SAM-binding methyltransferase superfamily. TrmB family.

It catalyses the reaction guanosine(46) in tRNA + S-adenosyl-L-methionine = N(7)-methylguanosine(46) in tRNA + S-adenosyl-L-homocysteine. Its pathway is tRNA modification; N(7)-methylguanine-tRNA biosynthesis. Its function is as follows. Catalyzes the formation of N(7)-methylguanine at position 46 (m7G46) in tRNA. This chain is tRNA (guanine-N(7)-)-methyltransferase, found in Pseudomonas savastanoi pv. phaseolicola (strain 1448A / Race 6) (Pseudomonas syringae pv. phaseolicola (strain 1448A / Race 6)).